The primary structure comprises 140 residues: Large ribosomal subunit protein uL11 (140 aa).

The protein belongs to the universal ribosomal protein uL11 family. In terms of assembly, part of the ribosomal stalk of the 50S ribosomal subunit. Interacts with L10 and the large rRNA to form the base of the stalk. L10 forms an elongated spine to which L12 dimers bind in a sequential fashion forming a multimeric L10(L12)X complex. One or more lysine residues are methylated.

Functionally, forms part of the ribosomal stalk which helps the ribosome interact with GTP-bound translation factors. The protein is Large ribosomal subunit protein uL11 of Dehalococcoides mccartyi (strain CBDB1).